The sequence spans 189 residues: Peptidyl-tRNA hydrolase (189 aa).

Y14 lines the tRNA pocket. Catalysis depends on H19, which acts as the Proton acceptor. Positions 64, 66, and 112 each coordinate tRNA.

Belongs to the PTH family. As to quaternary structure, monomer.

It is found in the cytoplasm. It carries out the reaction an N-acyl-L-alpha-aminoacyl-tRNA + H2O = an N-acyl-L-amino acid + a tRNA + H(+). Functionally, hydrolyzes ribosome-free peptidyl-tRNAs (with 1 or more amino acids incorporated), which drop off the ribosome during protein synthesis, or as a result of ribosome stalling. Catalyzes the release of premature peptidyl moieties from peptidyl-tRNA molecules trapped in stalled 50S ribosomal subunits, and thus maintains levels of free tRNAs and 50S ribosomes. In Erythrobacter litoralis (strain HTCC2594), this protein is Peptidyl-tRNA hydrolase.